Here is a 288-residue protein sequence, read N- to C-terminus: MEIIMQTAQYIIELLKAVFLGIVEGITEWLPISSTGHLILVNEFLNLRQSKDFIDMFNIVIQLGAILAVMVIYFKRLNPFQPGKTAREVQLTWKLWLKVVIACIPSAFFGLLLDDWMEAHLSNFFVVAIMLVVYGIAFIWIEDRNRRVDPKVTDLARMSYKTAFYIGLFQVLSIIPGTSRSGATILGGIIVGTSRSVAADFTFFLGIPTMFGYSGLKAVKYFIDGNTLTGGQAAILLVASVTAFLVSLFVIRFLMNYIKKHDFTVFGKYRIVLGIIVLFYGAVKLIFG.

8 helical membrane passes run Gly-25–Leu-45, Phe-53–Tyr-73, Trp-93–Leu-113, Leu-121–Ile-141, Val-171–Val-191, Ser-196–Leu-216, Gly-231–Ile-251, and Phe-263–Val-283.

It belongs to the UppP family.

Its subcellular location is the cell membrane. The catalysed reaction is di-trans,octa-cis-undecaprenyl diphosphate + H2O = di-trans,octa-cis-undecaprenyl phosphate + phosphate + H(+). Its function is as follows. Catalyzes the dephosphorylation of undecaprenyl diphosphate (UPP). Confers resistance to bacitracin. This Streptococcus thermophilus (strain ATCC BAA-250 / LMG 18311) protein is Undecaprenyl-diphosphatase.